The following is a 457-amino-acid chain: Angiopoietin-related protein 6 (457 aa).

The first 24 residues, 1–24 (MGTARLRKLQLLLLLGAWRALGGA), serve as a signal peptide directing secretion. Coiled-coil stretches lie at residues 51–77 (DSEL…RAAE) and 126–164 (LLAE…QHSS). Positions 201–235 (SNTSRRLDQTPEHQREQSLRQQGPPSSLLPTGHLA) are disordered. N-linked (GlcNAc...) asparagine glycosylation occurs at Asn202. The span at 205-218 (RRLDQTPEHQREQS) shows a compositional bias: basic and acidic residues. The segment covering 219–229 (LRQQGPPSSLL) has biased composition (polar residues). The region spanning 238 to 456 (TRPVGPWRDC…KAVMLTRLVR (219 aa)) is the Fibrinogen C-terminal domain. Cystine bridges form between Cys247–Cys274 and Cys397–Cys410.

In terms of tissue distribution, highly expressed in the liver, specifically in hepatocytes, and weakly in the heart. Expressed in hematopoietic cells, platelets and mast cells, and detected at wounded skin.

Its subcellular location is the secreted. May play a role in the wound healing process. May promote epidermal proliferation, remodeling and regeneration. May promote the chemotactic activity of endothelial cells and induce neovascularization. May counteract high-fat diet-induced obesity and related insulin resistance through increased energy expenditure. In Mus musculus (Mouse), this protein is Angiopoietin-related protein 6 (Angptl6).